The chain runs to 105 residues: Small ribosomal subunit protein uS10 (105 aa).

This sequence belongs to the universal ribosomal protein uS10 family. In terms of assembly, part of the 30S ribosomal subunit.

Functionally, involved in the binding of tRNA to the ribosomes. The sequence is that of Small ribosomal subunit protein uS10 from Rickettsia canadensis (strain McKiel).